A 466-amino-acid polypeptide reads, in one-letter code: Asparagine--tRNA ligase (466 aa).

This sequence belongs to the class-II aminoacyl-tRNA synthetase family. As to quaternary structure, homodimer.

It is found in the cytoplasm. The enzyme catalyses tRNA(Asn) + L-asparagine + ATP = L-asparaginyl-tRNA(Asn) + AMP + diphosphate + H(+). This chain is Asparagine--tRNA ligase, found in Shewanella oneidensis (strain ATCC 700550 / JCM 31522 / CIP 106686 / LMG 19005 / NCIMB 14063 / MR-1).